A 258-amino-acid polypeptide reads, in one-letter code: UPF0246 protein VV0659 (258 aa).

Belongs to the UPF0246 family.

In Vibrio vulnificus (strain YJ016), this protein is UPF0246 protein VV0659.